We begin with the raw amino-acid sequence, 474 residues long: uncharacterized protein (474 aa).

A compositionally biased stretch (acidic residues) spans 1–11; sequence MGGSDFEDDEL. Residues 1-163 are disordered; sequence MGGSDFEDDE…ETSPFNREDG (163 aa). Residues 12-25 are compositionally biased toward basic and acidic residues; that stretch reads FKDLYGEENEKKVE. A compositionally biased stretch (polar residues) spans 27-39; it reads ASGNQETSNVTPT. Over residues 40-76 the composition is skewed to basic and acidic residues; that stretch reads KENEGYEELEKSGEAGAERTKENPFREEPGADFDRSG. Over residues 129-140 the composition is skewed to polar residues; that stretch reads NDNYNENQSALT. RRM domains are found at residues 163–245 and 247–324; these read GKMF…EQEK and AKMF…RATP. Residues 412–474 form a disordered region; the sequence is DPSKMNQGTG…GGHSFHPYRR (63 aa). The segment covering 425 to 434 has biased composition (low complexity); that stretch reads PFSPSMPSGS. Residues 435–444 are compositionally biased toward gly residues; that stretch reads SRGGYHGRNP.

It is found in the nucleus. This is an uncharacterized protein from Schizosaccharomyces pombe (strain 972 / ATCC 24843) (Fission yeast).